The primary structure comprises 248 residues: NH(3)-dependent NAD(+) synthetase (248 aa).

31 to 38 (GVSGGVDS) serves as a coordination point for ATP. Position 37 (Asp-37) interacts with Mg(2+). Arg-114 contributes to the deamido-NAD(+) binding site. Residue Thr-134 participates in ATP binding. Glu-139 serves as a coordination point for Mg(2+). Lys-147 and Asp-154 together coordinate deamido-NAD(+). The ATP site is built by Lys-163 and Ser-185. Deamido-NAD(+) is bound at residue 236 to 237 (HK).

Belongs to the NAD synthetase family. In terms of assembly, homodimer.

It carries out the reaction deamido-NAD(+) + NH4(+) + ATP = AMP + diphosphate + NAD(+) + H(+). It participates in cofactor biosynthesis; NAD(+) biosynthesis; NAD(+) from deamido-NAD(+) (ammonia route): step 1/1. Functionally, catalyzes the ATP-dependent amidation of deamido-NAD to form NAD. Uses ammonia as a nitrogen source. This Methanoregula boonei (strain DSM 21154 / JCM 14090 / 6A8) protein is NH(3)-dependent NAD(+) synthetase.